We begin with the raw amino-acid sequence, 327 residues long: MPDREIKSPIWHPEPGTVEDVFDHTYKEKEGPKPPTVIVWRNVILMSLLHLGALYGLFLFPSARALTWIWFFGCLLFSALGITAGAHRLWSHRSYKASLPLQIFLALGNSMAFQNDIYEWSRDHRVHHKYSETDADPHNAVRGFFFSHVGWLLVRKHPDVIEKGRKLELSDLKADKVVMFQRRFYKPSVLLMCFFVPTFVPWYVWGESLWVAYFVPALLRYALVLNATWLVNSAAHMWGNRPYDSSINPRENRFVTFSAIGEGFHNYHHTFPFDYATSEFGCKLNLTTCCFIDLMCFLGLAREPKRVSREAVLARAQRTGDGSHWSG.

At 1-39 (MPDREIKSPIWHPEPGTVEDVFDHTYKEKEGPKPPTVIV) the chain is on the cytoplasmic side. The helical transmembrane segment at 40–60 (WRNVILMSLLHLGALYGLFLF) threads the bilayer. Asn-42 lines the substrate pocket. The Lumenal portion of the chain corresponds to 61-64 (PSAR). Residues 65–85 (ALTWIWFFGCLLFSALGITAG) traverse the membrane as a helical segment. The Cytoplasmic portion of the chain corresponds to 86–184 (AHRLWSHRSY…DKVVMFQRRF (99 aa)). The Fe cation site is built by His-87 and His-92. The short motif at 87-92 (HRLWSH) is the Histidine box-1 element. Substrate-binding residues include Asn-115, Arg-122, and Asp-123. The Fe cation site is built by His-124, His-127, and His-128. Residues 124–128 (HRVHH) carry the Histidine box-2 motif. Substrate contacts are provided by Arg-155 and Lys-156. A helical membrane pass occupies residues 185-204 (YKPSVLLMCFFVPTFVPWYV). Topologically, residues 205–208 (WGES) are lumenal. A helical transmembrane segment spans residues 209–230 (LWVAYFVPALLRYALVLNATWL). Trp-229 serves as a coordination point for substrate. Over 231–327 (VNSAAHMWGN…RTGDGSHWSG (97 aa)) the chain is Cytoplasmic. Fe cation contacts are provided by His-236, His-265, His-268, and His-269. Residues 265 to 269 (HNYHH) carry the Histidine box-3 motif.

Belongs to the fatty acid desaturase type 1 family. Fe(2+) is required as a cofactor.

Its subcellular location is the endoplasmic reticulum membrane. It catalyses the reaction octadecanoyl-CoA + 2 Fe(II)-[cytochrome b5] + O2 + 2 H(+) = (9Z)-octadecenoyl-CoA + 2 Fe(III)-[cytochrome b5] + 2 H2O. In terms of biological role, stearoyl-CoA desaturase that utilizes O(2) and electrons from reduced cytochrome b5 to introduce the first double bond into saturated fatty acyl-CoA substrates. Has high specificity and catalyzes the insertion of a cis double bond at the delta-9 position into fatty acyl-CoA substrates including palmitoyl-CoA and stearoyl-CoA. Contributes to the biosynthesis of membrane phospholipids, cholesterol esters and triglycerides. This is Acyl-CoA desaturase from Cyprinus carpio (Common carp).